The following is a 202-amino-acid chain: Recombination protein RecR (202 aa).

The C4-type zinc-finger motif lies at 61 to 76 (CARCNSFTEDEVCATC). The Toprim domain occupies 84-179 (GLLCIVETPA…KVTRLARGVP (96 aa)).

Belongs to the RecR family.

In terms of biological role, may play a role in DNA repair. It seems to be involved in an RecBC-independent recombinational process of DNA repair. It may act with RecF and RecO. The protein is Recombination protein RecR of Bordetella bronchiseptica (strain ATCC BAA-588 / NCTC 13252 / RB50) (Alcaligenes bronchisepticus).